We begin with the raw amino-acid sequence, 252 residues long: 5'-nucleotidase SurE (252 aa).

A divalent metal cation-binding residues include D8, D9, S39, and N95.

It belongs to the SurE nucleotidase family. The cofactor is a divalent metal cation.

The protein localises to the cytoplasm. The enzyme catalyses a ribonucleoside 5'-phosphate + H2O = a ribonucleoside + phosphate. Functionally, nucleotidase that shows phosphatase activity on nucleoside 5'-monophosphates. In Thermoanaerobacter sp. (strain X514), this protein is 5'-nucleotidase SurE.